Here is a 381-residue protein sequence, read N- to C-terminus: 1-deoxy-D-xylulose 5-phosphate reductoisomerase (381 aa).

NADPH contacts are provided by Thr-10, Gly-11, Ser-12, Ile-13, Gly-36, Lys-37, Asn-38, and Asn-122. Residue Lys-123 coordinates 1-deoxy-D-xylulose 5-phosphate. Glu-124 is an NADPH binding site. A Mn(2+)-binding site is contributed by Asp-148. 4 residues coordinate 1-deoxy-D-xylulose 5-phosphate: Ser-149, Glu-150, Ser-173, and His-196. Glu-150 is a binding site for Mn(2+). Gly-202 serves as a coordination point for NADPH. 1-deoxy-D-xylulose 5-phosphate contacts are provided by Ser-209, Asn-214, Lys-215, and Glu-218. Residue Glu-218 participates in Mn(2+) binding.

This sequence belongs to the DXR family. Mg(2+) is required as a cofactor. It depends on Mn(2+) as a cofactor.

It catalyses the reaction 2-C-methyl-D-erythritol 4-phosphate + NADP(+) = 1-deoxy-D-xylulose 5-phosphate + NADPH + H(+). It functions in the pathway isoprenoid biosynthesis; isopentenyl diphosphate biosynthesis via DXP pathway; isopentenyl diphosphate from 1-deoxy-D-xylulose 5-phosphate: step 1/6. In terms of biological role, catalyzes the NADPH-dependent rearrangement and reduction of 1-deoxy-D-xylulose-5-phosphate (DXP) to 2-C-methyl-D-erythritol 4-phosphate (MEP). This is 1-deoxy-D-xylulose 5-phosphate reductoisomerase from Desulfitobacterium hafniense (strain DSM 10664 / DCB-2).